The primary structure comprises 364 residues: Glycerophosphodiester phosphodiesterase (364 aa).

An N-terminal signal peptide occupies residues 1–18; it reads MKLKTLALSLLAAGVLAG. Cysteine 19 carries the N-palmitoyl cysteine lipid modification. A lipid anchor (S-diacylglycerol cysteine) is attached at cysteine 19. Residues 35-360 enclose the GP-PDE domain; the sequence is KIIIAHRGAS…DFPDTGVEFL (326 aa). Residue histidine 40 is the Proton acceptor of the active site. Positions 67 and 69 each coordinate Ca(2+). The active-site Proton donor is the histidine 82. Ca(2+) is bound at residue glutamate 175.

Belongs to the glycerophosphoryl diester phosphodiesterase family. Requires Ca(2+) as cofactor. Contains both ester- and amide-linked fatty acids.

Its subcellular location is the cell outer membrane. It carries out the reaction a sn-glycero-3-phosphodiester + H2O = an alcohol + sn-glycerol 3-phosphate + H(+). Glycerophosphodiester phosphodiesterase hydrolyzes glycerophosphodiesters into glycerol-3-phosphate (G3P) and the corresponding alcohol. Has a specific affinity for human immunoglobulin D myeloma protein. The chain is Glycerophosphodiester phosphodiesterase (glpQ) from Haemophilus influenzae (strain ATCC 51907 / DSM 11121 / KW20 / Rd).